Consider the following 285-residue polypeptide: Extracellular metalloprotease NCU07200 (285 aa).

A signal peptide spans 1–18 (MQIKSFLLAAAAAPAALG). Residue H197 coordinates Zn(2+). The active site involves E198. H201 provides a ligand contact to Zn(2+). C233 and C260 are joined by a disulfide. N-linked (GlcNAc...) asparagine glycosylation is present at N282.

The protein belongs to the peptidase M43B family.

The protein localises to the secreted. Secreted metalloproteinase that allows assimilation of proteinaceous substrates. This chain is Extracellular metalloprotease NCU07200, found in Neurospora crassa (strain ATCC 24698 / 74-OR23-1A / CBS 708.71 / DSM 1257 / FGSC 987).